The following is a 139-amino-acid chain: MELREKILERIKVTSSGCWEWQGATNNKGYGQVWCSNTGKVVYCHRVMSNAPKGSTVLHSCDNPLCCNPEHLSIGTPKENSTDMVNKGRSHKGYKLSDEDVMAIMESSESNVSLARTYGVSQQTICDIRKGRRHGRLRR.

The chain is Protein 2.8 from Escherichia phage T7 (Bacteriophage T7).